Consider the following 549-residue polypeptide: Glucose-6-phosphate isomerase (549 aa).

Glu353 acts as the Proton donor in catalysis. Active-site residues include His384 and Lys513.

Belongs to the GPI family.

Its subcellular location is the cytoplasm. The catalysed reaction is alpha-D-glucose 6-phosphate = beta-D-fructose 6-phosphate. It functions in the pathway carbohydrate biosynthesis; gluconeogenesis. Its pathway is carbohydrate degradation; glycolysis; D-glyceraldehyde 3-phosphate and glycerone phosphate from D-glucose: step 2/4. Functionally, catalyzes the reversible isomerization of glucose-6-phosphate to fructose-6-phosphate. The protein is Glucose-6-phosphate isomerase of Brucella ovis (strain ATCC 25840 / 63/290 / NCTC 10512).